Reading from the N-terminus, the 454-residue chain is Mitochondrial dynamics protein MID49 (454 aa).

The Mitochondrial intermembrane portion of the chain corresponds to 1-22; sequence MAEFSQKRGKRRGDEGLGSMVD. A helical transmembrane segment spans residues 23–43; it reads FLLANARLVLGVGGAAVLGIA. At 44–454 the chain is on the cytoplasmic side; the sequence is TLAVKRFIDR…SGLQEPEGLL (411 aa). The tract at residues 76-119 is disordered; it reads ATPHLQPRPPPAALSQPVLPLAPSSSAPEGPAKSDPEVTPQLSS. The segment covering 88–108 has biased composition (low complexity); it reads ALSQPVLPLAPSSSAPEGPAK.

It belongs to the MID49/MID51 family. Interacts with DNM1L.

The protein localises to the mitochondrion outer membrane. Functionally, mitochondrial outer membrane protein which regulates mitochondrial organization. It is required for mitochondrial fission and promotes the recruitment and association of the fission mediator dynamin-related protein 1 (DNM1L) to the mitochondrial surface independently of the mitochondrial fission FIS1 and MFF proteins. Regulates DNM1L GTPase activity. In Pongo abelii (Sumatran orangutan), this protein is Mitochondrial dynamics protein MID49 (MIEF2).